Consider the following 380-residue polypeptide: Queuine tRNA-ribosyltransferase (380 aa).

Residue aspartate 95 is the Proton acceptor of the active site. Substrate-binding positions include 95–99, aspartate 149, glutamine 192, and glycine 219; that span reads DSGGF. Residues 250 to 256 are RNA binding; the sequence is GVGSPDA. Aspartate 269 acts as the Nucleophile in catalysis. The interval 274 to 278 is RNA binding; important for wobble base 34 recognition; it reads TRIAR. Cysteine 307, cysteine 309, cysteine 312, and histidine 338 together coordinate Zn(2+).

The protein belongs to the queuine tRNA-ribosyltransferase family. In terms of assembly, homodimer. Within each dimer, one monomer is responsible for RNA recognition and catalysis, while the other monomer binds to the replacement base PreQ1. Zn(2+) is required as a cofactor.

The catalysed reaction is 7-aminomethyl-7-carbaguanine + guanosine(34) in tRNA = 7-aminomethyl-7-carbaguanosine(34) in tRNA + guanine. The protein operates within tRNA modification; tRNA-queuosine biosynthesis. Its function is as follows. Catalyzes the base-exchange of a guanine (G) residue with the queuine precursor 7-aminomethyl-7-deazaguanine (PreQ1) at position 34 (anticodon wobble position) in tRNAs with GU(N) anticodons (tRNA-Asp, -Asn, -His and -Tyr). Catalysis occurs through a double-displacement mechanism. The nucleophile active site attacks the C1' of nucleotide 34 to detach the guanine base from the RNA, forming a covalent enzyme-RNA intermediate. The proton acceptor active site deprotonates the incoming PreQ1, allowing a nucleophilic attack on the C1' of the ribose to form the product. After dissociation, two additional enzymatic reactions on the tRNA convert PreQ1 to queuine (Q), resulting in the hypermodified nucleoside queuosine (7-(((4,5-cis-dihydroxy-2-cyclopenten-1-yl)amino)methyl)-7-deazaguanosine). The polypeptide is Queuine tRNA-ribosyltransferase (Latilactobacillus sakei subsp. sakei (strain 23K) (Lactobacillus sakei subsp. sakei)).